The sequence spans 62 residues: Large ribosomal subunit protein bL32 (62 aa).

It belongs to the bacterial ribosomal protein bL32 family.

The sequence is that of Large ribosomal subunit protein bL32 from Levilactobacillus brevis (strain ATCC 367 / BCRC 12310 / CIP 105137 / JCM 1170 / LMG 11437 / NCIMB 947 / NCTC 947) (Lactobacillus brevis).